A 118-amino-acid chain; its full sequence is Mating-type P-specific polypeptide Pc (118 aa).

Residues 29 to 97 constitute a DNA-binding region (HMG box); that stretch reads KTTIYKNGFM…VRRQIAKLER (69 aa).

It localises to the nucleus. Functionally, mating type proteins are sequence specific DNA-binding proteins that act as master switches in yeast differentiation by controlling gene expression in a cell type-specific fashion. Required for conjugation and efficient meiosis. The chain is Mating-type P-specific polypeptide Pc (mat2-Pc) from Schizosaccharomyces pombe (Fission yeast).